The sequence spans 172 residues: Trypsin inhibitor DE-3 (172 aa).

Cystine bridges form between C39–C83 and C132–C139.

Belongs to the protease inhibitor I3 (leguminous Kunitz-type inhibitor) family.

Inhibition of trypsin. The polypeptide is Trypsin inhibitor DE-3 (Erythrina latissima (Broad-leaved coral tree)).